Here is a 700-residue protein sequence, read N- to C-terminus: MARKTPIERYRNIGISAHIDAGKTTTTERILFYTGVNHKIGEVHDGAATMDWMEQEQERGITITSAATTAFWKGMGNNYPEHRINIIDTPGHVDFTIEVERSMRVLDGACMVYCAVGGVQPQSETVWRQANKYKVPRLAFVNKMDRTGANFFKVYDQLKLRLKANPVPVVVPIGAEENFKGVVDLLKMKAIIWDEASQGTKFDYVDIPAELADTCQEWREKMVEAAAEASEDLMNKYLEEGDLPEADIVKALRDRTIACEIQPMLCGTAFKNKGVQRMLDAVIDFLPSPVDIPPVKGELESGEAAERQASDEEKFSSLAFKIMTDPFVGQLIFFRVYSGVVNSGDTLLNSTKGKKERLGRILQMHANQREEIKEVRAGDIAAAVGLKEATTGDTLCDPAHPIVLERMVFPEPVISQAVEPKTKADQEKMGLALNRLAQEDPSFRVQTDEESGQTIISGMGELHLEILVDRMKREFGVEATVGKPQVAYRETIRSTAKDVDGKFVKQSGGRGQYGHAVITLEPNEQGKGYEFFDEIKGGVIPREYIPAVDKGIQDTLKSGVLAGFPVVDVKVHLTFGSYHDVDSNENAFRMAGSMAFKEAMRRANPVVLEPMMAVEVETPEDYMGNVMGDLSGRRGIVQGMEDMVGGGKIVRAEVPLSEMFGYSTSLRSLTQGRATYTMEFKHYAEAPKNVADAIISAKSK.

The region spanning Glu8 to Val290 is the tr-type G domain. Residues Ala17–Thr24, Asp88–His92, and Asn142–Asp145 contribute to the GTP site.

The protein belongs to the TRAFAC class translation factor GTPase superfamily. Classic translation factor GTPase family. EF-G/EF-2 subfamily.

The protein resides in the cytoplasm. Its function is as follows. Catalyzes the GTP-dependent ribosomal translocation step during translation elongation. During this step, the ribosome changes from the pre-translocational (PRE) to the post-translocational (POST) state as the newly formed A-site-bound peptidyl-tRNA and P-site-bound deacylated tRNA move to the P and E sites, respectively. Catalyzes the coordinated movement of the two tRNA molecules, the mRNA and conformational changes in the ribosome. This chain is Elongation factor G 2, found in Burkholderia mallei (strain ATCC 23344).